Here is a 337-residue protein sequence, read N- to C-terminus: MKKVAVLGAGSWGSVLANLLVENGHQVMLWSRNQAQVDQLNQEHKNPHYMKDFTYNEGLVATSDMQAAVSGAAVILMVIPTKGVRQVAGQLAELLNGVTPAPLLVHATKGLEQNTYKRVSEMLAEEIPAASRRGIVVLSGPSHAEDVAIKDVTAVTAACGDLACAKEIQELFSNHYFRVYTNDDVIGAEFGAALKNIIALGSGALSGLGYHDNARAALITRGLAEIRRLGVAFGADPMTFIGLSGVGDLVVTATSKNSRNWRAGYQLGQGQKLADVVENMGMVIEGVATTKAAYELAQKRHVQMPITAALYRVLYEDEDIKSAIDGLMEREVTSEKE.

NADPH-binding residues include serine 11, tryptophan 12, arginine 32, and lysine 109. Positions 109, 140, and 142 each coordinate sn-glycerol 3-phosphate. Residue alanine 144 coordinates NADPH. Residues lysine 195, aspartate 248, serine 258, arginine 259, and asparagine 260 each contribute to the sn-glycerol 3-phosphate site. Catalysis depends on lysine 195, which acts as the Proton acceptor. Residue arginine 259 participates in NADPH binding. Valine 283 and glutamate 285 together coordinate NADPH.

The protein belongs to the NAD-dependent glycerol-3-phosphate dehydrogenase family.

It is found in the cytoplasm. The enzyme catalyses sn-glycerol 3-phosphate + NAD(+) = dihydroxyacetone phosphate + NADH + H(+). It catalyses the reaction sn-glycerol 3-phosphate + NADP(+) = dihydroxyacetone phosphate + NADPH + H(+). It participates in membrane lipid metabolism; glycerophospholipid metabolism. Its function is as follows. Catalyzes the reduction of the glycolytic intermediate dihydroxyacetone phosphate (DHAP) to sn-glycerol 3-phosphate (G3P), the key precursor for phospholipid synthesis. This chain is Glycerol-3-phosphate dehydrogenase [NAD(P)+], found in Limosilactobacillus fermentum (strain NBRC 3956 / LMG 18251) (Lactobacillus fermentum).